The chain runs to 728 residues: 1,4-alpha-glucan branching enzyme GlgB (728 aa).

D405 functions as the Nucleophile in the catalytic mechanism. Residue E458 is the Proton donor of the active site.

The protein belongs to the glycosyl hydrolase 13 family. GlgB subfamily. As to quaternary structure, monomer.

The catalysed reaction is Transfers a segment of a (1-&gt;4)-alpha-D-glucan chain to a primary hydroxy group in a similar glucan chain.. Its pathway is glycan biosynthesis; glycogen biosynthesis. Its function is as follows. Catalyzes the formation of the alpha-1,6-glucosidic linkages in glycogen by scission of a 1,4-alpha-linked oligosaccharide from growing alpha-1,4-glucan chains and the subsequent attachment of the oligosaccharide to the alpha-1,6 position. The polypeptide is 1,4-alpha-glucan branching enzyme GlgB (Salmonella typhi).